The following is a 387-amino-acid chain: Succinate--CoA ligase [ADP-forming] subunit beta (387 aa).

The ATP-grasp domain maps to 9-236 (RDLFEKYGVP…KAAADPLEAK (228 aa)). Residues Lys-45, 52 to 54 (GRG), Ala-94, and Glu-99 each bind ATP. 2 residues coordinate Mg(2+): Asn-191 and Asp-205. Substrate contacts are provided by residues Asn-256 and 318–320 (GIT).

Belongs to the succinate/malate CoA ligase beta subunit family. In terms of assembly, heterotetramer of two alpha and two beta subunits. Requires Mg(2+) as cofactor.

The catalysed reaction is succinate + ATP + CoA = succinyl-CoA + ADP + phosphate. The enzyme catalyses GTP + succinate + CoA = succinyl-CoA + GDP + phosphate. It functions in the pathway carbohydrate metabolism; tricarboxylic acid cycle; succinate from succinyl-CoA (ligase route): step 1/1. Succinyl-CoA synthetase functions in the citric acid cycle (TCA), coupling the hydrolysis of succinyl-CoA to the synthesis of either ATP or GTP and thus represents the only step of substrate-level phosphorylation in the TCA. The beta subunit provides nucleotide specificity of the enzyme and binds the substrate succinate, while the binding sites for coenzyme A and phosphate are found in the alpha subunit. The polypeptide is Succinate--CoA ligase [ADP-forming] subunit beta (Leifsonia xyli subsp. xyli (strain CTCB07)).